We begin with the raw amino-acid sequence, 1372 residues long: DNA-directed RNA polymerase subunit beta' (1372 aa).

Zn(2+)-binding residues include cysteine 69, cysteine 71, cysteine 84, and cysteine 87. Aspartate 460, aspartate 462, and aspartate 464 together coordinate Mg(2+). The Zn(2+) site is built by cysteine 808, cysteine 882, cysteine 889, and cysteine 892.

This sequence belongs to the RNA polymerase beta' chain family. As to quaternary structure, the RNAP catalytic core consists of 2 alpha, 1 beta, 1 beta' and 1 omega subunit. When a sigma factor is associated with the core the holoenzyme is formed, which can initiate transcription. The cofactor is Mg(2+). Requires Zn(2+) as cofactor.

It carries out the reaction RNA(n) + a ribonucleoside 5'-triphosphate = RNA(n+1) + diphosphate. Functionally, DNA-dependent RNA polymerase catalyzes the transcription of DNA into RNA using the four ribonucleoside triphosphates as substrates. This Rickettsia conorii (strain ATCC VR-613 / Malish 7) protein is DNA-directed RNA polymerase subunit beta'.